The sequence spans 1380 residues: MGTEAGEGITFSVPPFASVGFCTIPEGGSCRRGGGAATAAEGEPSLQPLLVPPPPPPPGSFWNVESAAAPGTSCPTTAPGSSATRGRGNSGSGGGRRTTVAYVINEASQGQLVVAESEALQSLREACEAVGATLETLHFGKLDFGETAVLDRFYNADIAVVEMSDAFRQPSLFYHLGVRESFSMANNIILYCDTNSDSLQSLKEIICQKNTVCTGNYTFIPYMVTPHNKVYCCDSSFMKGLTELMQPNFELLLGPICLPLVDRFVQLLKVAQASSSQYFRESILSDIRKARNLYTGKELAAELARIRQRVDNIEVLTADIVINLLLSYRDIQDYDSIVKLVETLEKLPTFDLASHHHVKFHYAFALNRRNLPGDRAKALDIMIPMVQSEEQVASDMYCLVGRIYKDMFLDSNFTDTESRDHGASWFKKAFESEPTLQSGINYAVLLLAAGHQFESSFELRKVGVKLSSLLGKKGNLEKLQSYWEVGFFLGASVLANDHLRVIQASEKLFRLKTPAWYLKSIVETILIYKHFVKLTTEQPSAKQELVDFWMDFLVEATKTDVTVVRFPVLILEPTKIYQPSYLSINNEVEEKTISIWHVLPDDKKGIHEWNFGASSVRGVSISKFEERCCFLYVLHNSDDFQIYFCTELHCKRFFEMVNTITEEKGRGAEDGDCEGDSLEYDYEYDENGDRVVLGKGTYGIVYAGRDLSNQVRIAIKEIPERDSRYSQPLHEEIALHKHLKHKNIVQYLGSFSENGFIKIFMEQVPGGSLSALLRSKWGPLKDNEQTIGFYTKQILEGLKYLHDNQIVHRDIKGDNVLINTYSGVLKISDFGTSKRLAGINPCTETFTGTLQYMAPEIIDKGPRGYGKAADIWSLGCTIIEMATGKPPFYELGEPQAAMFKVGMFKVHPEIPESMSAEAKAFILKCFEPDPDKRACANDLLIDEFLKVSSKKKKTQPKLSALSTGSNEYLRSISLPVPVLVEDTSSSSEYGSVSPDTELKADPFSFKARAKSCGEKDGKGIRTLFLGIPDENFEDHSAPPSPEEKDSGFFMLRKDSERRATLHRILTEDQDKVVRNLMESLAQGAEEPKLKWEHITTLISSLREFVRSTDRKIIATTLSKLKLELDFDSHGISQVQVVLFGFQDAVNKVLRNHNIKPHWMFALDSIIRKAVQTAITILVPELRPHFSLASESDTADPEDLDVEDEHEELSSNQTVRRPQAITEDAVATSGVSTLSSTVSHDSQNAHRSLNVQLGRMKIETNRLLEELVRKERELQALLHQAIEEKDQEIRHLKLKSQPIDIPGFPVCHLNSPGTTTEDSELPGWLRENGADEDTISRFLAEDYTLVDVLYYVTRDDLKCLRLRGGMLCTLWKAIIDFRNKC.

Residues 30–97 form a disordered region; it reads CRRGGGAATA…GNSGSGGGRR (68 aa). The span at 37-49 shows a compositional bias: low complexity; it reads ATAAEGEPSLQPL. A compositionally biased stretch (pro residues) spans 50–59; it reads LVPPPPPPPG. Residues Arg85 and Arg87 each carry the asymmetric dimethylarginine modification. Phosphoserine; by PIM1 and PKB/AKT1 is present on Ser90. The segment at 649–1374 is interaction with PPIA/CYPA; the sequence is HCKRFFEMVN…MLCTLWKAII (726 aa). Residues 687 to 945 enclose the Protein kinase domain; sequence NGDRVVLGKG…ANDLLIDEFL (259 aa). ATP-binding positions include 693 to 701 and Lys716; that span reads LGKGTYGIV. Position 725 is a phosphotyrosine (Tyr725). The active-site Proton acceptor is the Asp810. Thr820 is subject to Phosphothreonine; by autocatalysis. Thr845 carries the post-translational modification Phosphothreonine; by autocatalysis, MELK and MAP3K6. A Phosphothreonine; by autocatalysis modification is found at Thr849. Ser965 is subject to Phosphoserine. Phosphoserine; by autocatalysis is present on Ser973. Phosphoserine occurs at positions 1036 and 1040. Residues 1188–1215 form a disordered region; that stretch reads ASESDTADPEDLDVEDEHEELSSNQTVR. Residues 1192–1206 are compositionally biased toward acidic residues; the sequence is DTADPEDLDVEDEHE. Residues 1252–1292 are a coiled coil; it reads LGRMKIETNRLLEELVRKERELQALLHQAIEEKDQEIRHLK.

Belongs to the protein kinase superfamily. STE Ser/Thr protein kinase family. MAP kinase kinase kinase subfamily. As to quaternary structure, homodimer when inactive. Binds both upstream activators and downstream substrates in multimolecular complexes. Part of a cytoplasmic complex made of HIPK1, DAB2IP and MAP3K5 in response to TNF. This complex formation promotes MAP3K5-JNK activation and subsequent apoptosis. Interacts with SOCS1 which recognizes phosphorylation of Tyr-725 and induces MAP3K5/ASK1 degradation in endothelial cells. Interacts with the 14-3-3 family proteins such as YWHAB, YWHAE, YWHAQ, YWHAH, YWHAZ and SFN. Interacts with ARRB2, BIRC2, DAB2IP, IGF1R, MAP3K6/ASK2, PIM1, PGAM5, SOCS1, STUB1, TRAF2 and TXN. Interacts with ERN1 in a TRAF2-dependent manner. Interacts with calcineurin subunit PPP3R1, PPP5C, PPM1L and TRAF6. Interacts (via N-terminus) with RAF1 and this interaction inhibits the proapoptotic function of MAP3K5. Interacts with DAB2IP (via N-terminus C2 domain); the interaction occurs in a TNF-alpha-dependent manner. Interacts with DUSP13A; may positively regulate apoptosis. Interacts with PPIA/CYPA. Interacts with PRMT1; the interaction results in MAP3K5 methylation by PRMT1 which inhibits MAP3K5 activation. Interacts with TRAF2; the interaction is inhibited by PRMT1. Interacts with TRIM48. Mg(2+) serves as cofactor. Ser-90 and Ser-1040 are inactivating phosphorylation sites, the former of which is phosphorylated by AKT1. Phosphorylated at Ser-973 which induces association of MAP3K5/ASK1 with the 14-3-3 family proteins and suppresses MAP3K5/ASK1 activity. Calcineurin (CN) dephosphorylates this site. Also dephosphorylated and activated by PGAM5. Phosphorylated at Thr-845 through autophosphorylation and by MAP3K6/ASK2 which leads to activation. Thr-845 is dephosphorylated by PPP5C. Phosphorylation at Ser-973 in response to oxidative stress is negatively regulated by PPIA/CYPA. Post-translationally, ubiquitinated. Tumor necrosis factor (TNF) induces TNFR2-dependent ubiquitination, leading to proteasomal degradation. Ubiquitinated by RC3H2 in a TRIM48-dependent manner. In terms of processing, methylation at Arg-85 and Arg-87 by PRMT1 promotes association of MAP3K5 with thioredoxin and negatively regulates MAP3K5 association with TRAF2, inhibiting MAP3K5 activation. Methylation is blocked by ubiquitination of PRMT1 by TRIM48. Expressed in various adult mouse tissues including heart, brain, lung, liver and kidney.

It localises to the cytoplasm. The protein localises to the endoplasmic reticulum. It catalyses the reaction L-seryl-[protein] + ATP = O-phospho-L-seryl-[protein] + ADP + H(+). The enzyme catalyses L-threonyl-[protein] + ATP = O-phospho-L-threonyl-[protein] + ADP + H(+). Activated by various stressors, including oxidative stress, endoplasmic reticulum stress, and calcium overload, as well as by receptor-mediated inflammatory signals, such as the tumor necrosis factor (TNF) and lipopolysaccharide (LPS). Homophilic association of MAP3K5/ASK1 through the C-terminal coiled-coil domains and the heteromeric complex formation of MAP3K5/ASK1 with the reduced form of thioredoxin (TXN), constitutes an inactive form of the kinase. Upon ROS-induced dissociation of TXN from MAP3K5/ASK1, TRAF2 and TRAF6 are reciprocally recruited to MAP3K5/ASK1 and form the active MAP3K5/ASK1 signalosome, in which TRAF2 and TRAF6 appear to facilitate the active configuration of MAP3K5/ASK1. MAP3K5/ASK1 activity is also regulated through several phosphorylation and dephosphorylation events. Thr-845 is an activating phosphorylation site that is autophosphorylated and phosphorylated by MAP3K6/ASK2 and dephosphorylated by PPP5C. Ser-90 and Ser-1040 are inactivating phosphorylation sites, the former of which is phosphorylated by AKT1. Phosphorylation of Ser-973 induces association of MAP3K5/ASK1 with the 14-3-3 family proteins, which suppresses MAP3K5/ASK1 activity. Calcium/calmodulin-activated protein phosphatase calcineurin (PPP3CA) has been shown to directly dephosphorylate this site. SOCS1 binds to ASK1 by recognizing phosphorylation of Tyr-725 and induces MAP3K5/ASK1 degradation in endothelial cells. Also dephosphorylated and activated by PGAM5. Contains an N-terminal autoinhibitory domain. Its function is as follows. Serine/threonine kinase which acts as an essential component of the MAP kinase signal transduction pathway. Plays an important role in the cascades of cellular responses evoked by changes in the environment. Mediates signaling for determination of cell fate such as differentiation and survival. Plays a crucial role in the apoptosis signal transduction pathway through mitochondria-dependent caspase activation. MAP3K5/ASK1 is required for the innate immune response, which is essential for host defense against a wide range of pathogens. Mediates signal transduction of various stressors like oxidative stress as well as by receptor-mediated inflammatory signals, such as the tumor necrosis factor (TNF) or lipopolysaccharide (LPS). Once activated, acts as an upstream activator of the MKK/JNK signal transduction cascade and the p38 MAPK signal transduction cascade through the phosphorylation and activation of several MAP kinase kinases like MAP2K4/SEK1, MAP2K3/MKK3, MAP2K6/MKK6 and MAP2K7/MKK7. These MAP2Ks in turn activate p38 MAPKs and c-jun N-terminal kinases (JNKs). Both p38 MAPK and JNKs control the transcription factors activator protein-1 (AP-1). This is Mitogen-activated protein kinase kinase kinase 5 (Map3k5) from Mus musculus (Mouse).